The sequence spans 117 residues: UPF0251 protein DET0218 (117 aa).

This sequence belongs to the UPF0251 family.

This Dehalococcoides mccartyi (strain ATCC BAA-2266 / KCTC 15142 / 195) (Dehalococcoides ethenogenes (strain 195)) protein is UPF0251 protein DET0218.